A 575-amino-acid polypeptide reads, in one-letter code: Dihydroxy-acid dehydratase (575 aa).

Residues M1–T25 are disordered. A compositionally biased stretch (basic and acidic residues) spans R8–T25. C64 lines the [2Fe-2S] cluster pocket. D96 contacts Mg(2+). Residue C137 participates in [2Fe-2S] cluster binding. Residues D138 and K139 each coordinate Mg(2+). At K139 the chain carries N6-carboxylysine. C214 contacts [2Fe-2S] cluster. Mg(2+) is bound at residue E465. The Proton acceptor role is filled by S491.

This sequence belongs to the IlvD/Edd family. Homodimer. [2Fe-2S] cluster serves as cofactor. It depends on Mg(2+) as a cofactor.

The enzyme catalyses (2R)-2,3-dihydroxy-3-methylbutanoate = 3-methyl-2-oxobutanoate + H2O. The catalysed reaction is (2R,3R)-2,3-dihydroxy-3-methylpentanoate = (S)-3-methyl-2-oxopentanoate + H2O. It functions in the pathway amino-acid biosynthesis; L-isoleucine biosynthesis; L-isoleucine from 2-oxobutanoate: step 3/4. Its pathway is amino-acid biosynthesis; L-valine biosynthesis; L-valine from pyruvate: step 3/4. In terms of biological role, functions in the biosynthesis of branched-chain amino acids. Catalyzes the dehydration of (2R,3R)-2,3-dihydroxy-3-methylpentanoate (2,3-dihydroxy-3-methylvalerate) into 2-oxo-3-methylpentanoate (2-oxo-3-methylvalerate) and of (2R)-2,3-dihydroxy-3-methylbutanoate (2,3-dihydroxyisovalerate) into 2-oxo-3-methylbutanoate (2-oxoisovalerate), the penultimate precursor to L-isoleucine and L-valine, respectively. The polypeptide is Dihydroxy-acid dehydratase (Mycobacterium avium (strain 104)).